The chain runs to 197 residues: 3-isopropylmalate dehydratase small subunit (197 aa).

The protein belongs to the LeuD family. LeuD type 1 subfamily. Heterodimer of LeuC and LeuD.

The catalysed reaction is (2R,3S)-3-isopropylmalate = (2S)-2-isopropylmalate. Its pathway is amino-acid biosynthesis; L-leucine biosynthesis; L-leucine from 3-methyl-2-oxobutanoate: step 2/4. Its function is as follows. Catalyzes the isomerization between 2-isopropylmalate and 3-isopropylmalate, via the formation of 2-isopropylmaleate. This chain is 3-isopropylmalate dehydratase small subunit, found in Streptomyces griseus subsp. griseus (strain JCM 4626 / CBS 651.72 / NBRC 13350 / KCC S-0626 / ISP 5235).